A 485-amino-acid chain; its full sequence is Inosine-5'-monophosphate dehydrogenase (485 aa).

CBS domains are found at residues 99-154 and 156-212; these read IVED…TVKE and MTRE…KNAV. NAD(+) contacts are provided by residues Asp247 and 294 to 296; that span reads GIG. 2 residues coordinate K(+): Gly296 and Gly298. Ser299 provides a ligand contact to IMP. Cys301 is a binding site for K(+). The active-site Thioimidate intermediate is Cys301. Residues 334–336, 357–358, and 381–385 contribute to the IMP site; these read DGG, GN, and YRGMG. Arg397 serves as the catalytic Proton acceptor. Glu412 serves as a coordination point for IMP. K(+) is bound by residues Glu466, Ser467, and His468.

The protein belongs to the IMPDH/GMPR family. Homotetramer. K(+) serves as cofactor.

The enzyme catalyses IMP + NAD(+) + H2O = XMP + NADH + H(+). The protein operates within purine metabolism; XMP biosynthesis via de novo pathway; XMP from IMP: step 1/1. Its activity is regulated as follows. Mycophenolic acid (MPA) is a non-competitive inhibitor that prevents formation of the closed enzyme conformation by binding to the same site as the amobile flap. In contrast, mizoribine monophosphate (MZP) is a competitive inhibitor that induces the closed conformation. MPA is a potent inhibitor of mammalian IMPDHs but a poor inhibitor of the bacterial enzymes. MZP is a more potent inhibitor of bacterial IMPDH. In terms of biological role, catalyzes the conversion of inosine 5'-phosphate (IMP) to xanthosine 5'-phosphate (XMP), the first committed and rate-limiting step in the de novo synthesis of guanine nucleotides, and therefore plays an important role in the regulation of cell growth. The sequence is that of Inosine-5'-monophosphate dehydrogenase from Pyrococcus furiosus (strain ATCC 43587 / DSM 3638 / JCM 8422 / Vc1).